The sequence spans 187 residues: Ribonuclease HII (187 aa).

In terms of domain architecture, RNase H type-2 spans 1 to 187 (MIILGIDEAG…YKPVQVLLNE (187 aa)). A divalent metal cation-binding residues include Asp-7, Glu-8, and Asp-99.

Belongs to the RNase HII family. Requires Mn(2+) as cofactor. Mg(2+) is required as a cofactor.

The protein localises to the cytoplasm. The catalysed reaction is Endonucleolytic cleavage to 5'-phosphomonoester.. In terms of biological role, endonuclease that specifically degrades the RNA of RNA-DNA hybrids. This is Ribonuclease HII from Francisella tularensis subsp. mediasiatica (strain FSC147).